The chain runs to 445 residues: Glutamyl-tRNA reductase (445 aa).

Residues 49–52 (TCNR), Ser-109, 114–116 (ETQ), and Gln-120 contribute to the substrate site. Cys-50 (nucleophile) is an active-site residue. 189–194 (GAGEMS) lines the NADP(+) pocket.

It belongs to the glutamyl-tRNA reductase family. In terms of assembly, homodimer.

The catalysed reaction is (S)-4-amino-5-oxopentanoate + tRNA(Glu) + NADP(+) = L-glutamyl-tRNA(Glu) + NADPH + H(+). Its pathway is porphyrin-containing compound metabolism; protoporphyrin-IX biosynthesis; 5-aminolevulinate from L-glutamyl-tRNA(Glu): step 1/2. Functionally, catalyzes the NADPH-dependent reduction of glutamyl-tRNA(Glu) to glutamate 1-semialdehyde (GSA). The chain is Glutamyl-tRNA reductase from Staphylococcus carnosus (strain TM300).